Consider the following 285-residue polypeptide: Homeobox protein Hox-A4 (285 aa).

2 disordered regions span residues Pro19–Ala70 and Ala94–Ala130. Residues Gly27–Gly41 are compositionally biased toward gly residues. Low complexity predominate over residues Arg44–Ala70. The span at Gly106 to Pro118 shows a compositional bias: pro residues. The Antp-type hexapeptide signature appears at Val159 to Lys164. Positions Pro180–His239 form a DNA-binding region, homeobox. The segment at Asp238 to Ile285 is disordered.

The protein belongs to the Antp homeobox family. Deformed subfamily.

Its subcellular location is the nucleus. Its function is as follows. Sequence-specific transcription factor which is part of a developmental regulatory system that provides cells with specific positional identities on the anterior-posterior axis. Binds to sites in the 5'-flanking sequence of its coding region with various affinities. The consensus sequences of the high and low affinity binding sites are 5'-TAATGA[CG]-3' and 5'-CTAATTTT-3'. The chain is Homeobox protein Hox-A4 (Hoxa4) from Mus musculus (Mouse).